Reading from the N-terminus, the 144-residue chain is Transcription antitermination protein NusB (144 aa).

Belongs to the NusB family.

Its function is as follows. Involved in transcription antitermination. Required for transcription of ribosomal RNA (rRNA) genes. Binds specifically to the boxA antiterminator sequence of the ribosomal RNA (rrn) operons. The sequence is that of Transcription antitermination protein NusB from Streptococcus agalactiae serotype Ia (strain ATCC 27591 / A909 / CDC SS700).